A 441-amino-acid chain; its full sequence is FAM10 family protein At4g22670 (441 aa).

A disordered region spans residues 41-114; that stretch reads KIPTGVHEED…PQKMGDSSVE (74 aa). The span at 46-55 shows a compositional bias: basic and acidic residues; that stretch reads VHEEDKDTKP. 2 stretches are compositionally biased toward acidic residues: residues 61–71 and 78–102; these read EESDDDMDETE and EEEEEEDEIVESDVELEGDTVEPDN. Phosphoserine is present on residues S63 and S89. TPR repeat units lie at residues 121–156, 158–190, and 191–224; these read EAAQEAKGKAMEALSEGNFDEAIEHLTRAITLNPTS, IMYGNRASVYIKLKKPNAAIRDANAALEINPDS, and AKGYKSRGMARAMLGEWAEAAKDLHLASTIDYDE. A coiled-coil region spans residues 236 to 285; it reads NAHKLEEHRRKYDRLRKEREDKKAERDRLRRRAEAQAAYDKAKKEEQSSS. Over residues 244-282 the composition is skewed to basic and acidic residues; it reads RRKYDRLRKEREDKKAERDRLRRRAEAQAAYDKAKKEEQ. Positions 244–314 are disordered; sequence RRKYDRLRKE…MPGGFPGGMG (71 aa). The span at 289-314 shows a compositional bias: gly residues; the sequence is SGGGFPGGMPGGFPGGMPGGFPGGMG. The region spanning 391 to 430 is the STI1 domain; the sequence is DPELMTAFSDPEVMAALQDVMKNPANLAKHQANPKVAPVI.

It belongs to the FAM10 family.

This Arabidopsis thaliana (Mouse-ear cress) protein is FAM10 family protein At4g22670.